Here is a 517-residue protein sequence, read N- to C-terminus: Ascochitine biosynthesis cluster MFS transporter (517 aa).

The span at Met-1–Arg-12 shows a compositional bias: basic and acidic residues. A disordered region spans residues Met-1–Gly-45. Asn-19 carries N-linked (GlcNAc...) asparagine glycosylation. The next 12 membrane-spanning stretches (helical) occupy residues Trp-75–Phe-95, Val-111–Trp-131, Leu-141–Ala-161, Phe-172–Ile-192, Val-204–Val-224, Trp-232–Val-252, Ile-308–Val-328, Ala-347–Val-367, Leu-390–Ser-410, Ala-421–Ile-441, Leu-457–His-475, and Leu-485–Pro-505.

It belongs to the major facilitator superfamily. CAR1 family.

The protein localises to the membrane. Its function is as follows. MFS transporter; part of the gene cluster that mediates the biosynthesis the mycotoxin ascochitine, an o-quinone methide that plays a possible protective role against other microbial competitors in nature and is considered to be important for pathogenicity of legume-associated Didymella species. The protein is Ascochitine biosynthesis cluster MFS transporter of Didymella fabae (Leaf and pod spot disease fungus).